We begin with the raw amino-acid sequence, 393 residues long: MLRWLTAGESHGPALVAILEGLPAGVSVTSDDIAAALLRRRAGYGRGARMKFEKDEVSIIGGIRHGRTLGGPVAIQVGNTEWPKWQKVMSPDPVPAEELEGVARNAPLTRPRPGHADLVGMQKYGYDEARPILERASARETAARVALGEVARQFLRQALGVEIVSHVVAMGSVSVPDDAPIPAPEDLARVDADPVRCFDPETSARMVAEVDDTRKTGDTLGGVVEVIAYGLPPGLGSHVHWDRRLDARLAGALMGIQAIKGVEFGDGFRTAARRGSAAHDEIDVGPDGIRRRSNRAGGVEGGMSTGDPLRVRAAMKPIATVPRALDTIDVSTGQPAQAHHQRSDVTAVPAAGVVAEAMVALVLADAALEKFGGDSVAETVRNLRGYLDSLIVR.

2 residues coordinate NADP(+): arginine 40 and arginine 46. Residues 135–137, 257–258, glycine 301, 316–320, and arginine 342 each bind FMN; these read RAS, QA, and KPIAT. Positions 280–306 are disordered; that stretch reads DEIDVGPDGIRRRSNRAGGVEGGMSTG.

It belongs to the chorismate synthase family. As to quaternary structure, homotetramer. Requires FMNH2 as cofactor.

It catalyses the reaction 5-O-(1-carboxyvinyl)-3-phosphoshikimate = chorismate + phosphate. Its pathway is metabolic intermediate biosynthesis; chorismate biosynthesis; chorismate from D-erythrose 4-phosphate and phosphoenolpyruvate: step 7/7. Functionally, catalyzes the anti-1,4-elimination of the C-3 phosphate and the C-6 proR hydrogen from 5-enolpyruvylshikimate-3-phosphate (EPSP) to yield chorismate, which is the branch point compound that serves as the starting substrate for the three terminal pathways of aromatic amino acid biosynthesis. This reaction introduces a second double bond into the aromatic ring system. The polypeptide is Chorismate synthase (Thermobifida fusca (strain YX)).